Consider the following 502-residue polypeptide: Peroxisomal catalase (502 aa).

Residues histidine 64 and asparagine 137 contribute to the active site. Tyrosine 347 is a binding site for heme. The Microbody targeting signal signature appears at 500–502 (AKM).

It belongs to the catalase family. The cofactor is heme.

The protein localises to the peroxisome matrix. The catalysed reaction is 2 H2O2 = O2 + 2 H2O. Functionally, catalyzes the degradation of hydrogen peroxide (H(2)O(2)) generated by peroxisomal oxidases to water and oxygen, thereby protecting cells from the toxic effects of hydrogen peroxide. This chain is Peroxisomal catalase, found in Toxoplasma gondii.